The primary structure comprises 489 residues: Ecdysteroid UDP-glucosyltransferase (489 aa).

Residues 1–17 form the signal peptide; that stretch reads MVFLIIALTLLATGARA.

This sequence belongs to the UDP-glycosyltransferase family.

Its function is as follows. Catalyzes the transfer of glucose from UDP-glucose to ecdysteroids which are insect molting hormones. Expression of egt interferes with normal insect development and block molting. In Orgyia pseudotsugata (Douglas-fir tussock moth), this protein is Ecdysteroid UDP-glucosyltransferase (EGT).